Reading from the N-terminus, the 433-residue chain is Glutamate-1-semialdehyde 2,1-aminomutase (433 aa).

Lysine 265 is subject to N6-(pyridoxal phosphate)lysine.

The protein belongs to the class-III pyridoxal-phosphate-dependent aminotransferase family. HemL subfamily. In terms of assembly, homodimer. Pyridoxal 5'-phosphate serves as cofactor.

It localises to the cytoplasm. It catalyses the reaction (S)-4-amino-5-oxopentanoate = 5-aminolevulinate. Its pathway is porphyrin-containing compound metabolism; protoporphyrin-IX biosynthesis; 5-aminolevulinate from L-glutamyl-tRNA(Glu): step 2/2. This Shewanella denitrificans (strain OS217 / ATCC BAA-1090 / DSM 15013) protein is Glutamate-1-semialdehyde 2,1-aminomutase.